The following is a 72-amino-acid chain: Translation initiation factor IF-1 (72 aa).

The 72-residue stretch at 1–72 (MAKEEVLEFP…TKGRITYRFK (72 aa)) folds into the S1-like domain.

It belongs to the IF-1 family. As to quaternary structure, component of the 30S ribosomal translation pre-initiation complex which assembles on the 30S ribosome in the order IF-2 and IF-3, IF-1 and N-formylmethionyl-tRNA(fMet); mRNA recruitment can occur at any time during PIC assembly.

The protein localises to the cytoplasm. One of the essential components for the initiation of protein synthesis. Stabilizes the binding of IF-2 and IF-3 on the 30S subunit to which N-formylmethionyl-tRNA(fMet) subsequently binds. Helps modulate mRNA selection, yielding the 30S pre-initiation complex (PIC). Upon addition of the 50S ribosomal subunit IF-1, IF-2 and IF-3 are released leaving the mature 70S translation initiation complex. The protein is Translation initiation factor IF-1 of Brucella abortus (strain 2308).